A 425-amino-acid polypeptide reads, in one-letter code: Serine--tRNA ligase (425 aa).

L-serine is bound at residue 231-233; sequence TAE. ATP is bound by residues 262 to 264 and V278; that span reads RTE. E285 serves as a coordination point for L-serine. 349–352 serves as a coordination point for ATP; sequence EVTS. T384 contributes to the L-serine binding site.

The protein belongs to the class-II aminoacyl-tRNA synthetase family. Type-1 seryl-tRNA synthetase subfamily. Homodimer. The tRNA molecule binds across the dimer.

It is found in the cytoplasm. The catalysed reaction is tRNA(Ser) + L-serine + ATP = L-seryl-tRNA(Ser) + AMP + diphosphate + H(+). It catalyses the reaction tRNA(Sec) + L-serine + ATP = L-seryl-tRNA(Sec) + AMP + diphosphate + H(+). It participates in aminoacyl-tRNA biosynthesis; selenocysteinyl-tRNA(Sec) biosynthesis; L-seryl-tRNA(Sec) from L-serine and tRNA(Sec): step 1/1. Its function is as follows. Catalyzes the attachment of serine to tRNA(Ser). Is also able to aminoacylate tRNA(Sec) with serine, to form the misacylated tRNA L-seryl-tRNA(Sec), which will be further converted into selenocysteinyl-tRNA(Sec). The protein is Serine--tRNA ligase of Dictyoglomus thermophilum (strain ATCC 35947 / DSM 3960 / H-6-12).